The following is a 272-amino-acid chain: Pyrroline-5-carboxylate reductase 3 (272 aa).

It belongs to the pyrroline-5-carboxylate reductase family.

It localises to the cytoplasm. It catalyses the reaction L-proline + NADP(+) = (S)-1-pyrroline-5-carboxylate + NADPH + 2 H(+). The catalysed reaction is L-proline + NAD(+) = (S)-1-pyrroline-5-carboxylate + NADH + 2 H(+). Its pathway is amino-acid biosynthesis; L-proline biosynthesis; L-proline from L-glutamate 5-semialdehyde: step 1/1. Its function is as follows. Catalyzes the reduction of 1-pyrroline-5-carboxylate (PCA) to L-proline. This chain is Pyrroline-5-carboxylate reductase 3 (proG), found in Bacillus subtilis (strain 168).